We begin with the raw amino-acid sequence, 205 residues long: MDLKQKYIFIEGTNCPVTVRGRLLQVFRRSVSGELFKGLWLVLREMLRFNIHTTQYPKEKLPLSPRYRAIHELLRLLESGNERCIGCGLCEKICISNCIRMETSYGEDGRKKVHEYTINFGRCIFCGFCAEVCPELAIVHGGRYENASEQRAHFGLKEDMLTPMERFMNQGQKEFPGFGALSQDADSKVKKTPLAYFTPKGEENV.

4Fe-4S ferredoxin-type domains follow at residues 75-104 (RLLE…METS) and 114-143 (HEYT…HGGR). Positions 84, 87, 90, 94, 123, 126, 129, and 133 each coordinate [4Fe-4S] cluster.

Belongs to the complex I 23 kDa subunit family. In terms of assembly, NDH-1 is composed of 14 different subunits. Subunits NuoA, H, J, K, L, M, N constitute the membrane sector of the complex. It depends on [4Fe-4S] cluster as a cofactor.

The protein resides in the cell inner membrane. The enzyme catalyses a quinone + NADH + 5 H(+)(in) = a quinol + NAD(+) + 4 H(+)(out). Functionally, NDH-1 shuttles electrons from NADH, via FMN and iron-sulfur (Fe-S) centers, to quinones in the respiratory chain. The immediate electron acceptor for the enzyme in this species is believed to be ubiquinone. Couples the redox reaction to proton translocation (for every two electrons transferred, four hydrogen ions are translocated across the cytoplasmic membrane), and thus conserves the redox energy in a proton gradient. The protein is NADH-quinone oxidoreductase subunit I of Wolinella succinogenes (strain ATCC 29543 / DSM 1740 / CCUG 13145 / JCM 31913 / LMG 7466 / NCTC 11488 / FDC 602W) (Vibrio succinogenes).